The primary structure comprises 152 residues: Transcriptional regulator MraZ (152 aa).

SpoVT-AbrB domains are found at residues 5-52 (ANAI…PLPE) and 81-124 (ATEG…DHSV).

Belongs to the MraZ family. In terms of assembly, forms oligomers.

It localises to the cytoplasm. The protein resides in the nucleoid. The chain is Transcriptional regulator MraZ from Pseudoalteromonas atlantica (strain T6c / ATCC BAA-1087).